The sequence spans 244 residues: MSKLDLNALNELPKVDRILALAETNAQLEKLDAEGRVAWALDNLPGEYVLSSSFGIQAAVSLHLVNQIRPDIPVILTDTGYLFPETYRFIDELTDKLKLNLKVYRATESAAWQEARYGKLWEQGVEGIEKYNDINKVEPMNRALKELNVQTWFAGLRREQSGSRANLPVLAIQRGVFKVLPIIDWDNRTIYQYLQKHGLKYHPLWDEGYLSVGDTHTTRKWEPGMAEEETRFFGLKRECGLHEG.

The active-site Nucleophile; cysteine thiosulfonate intermediate is the Cys-239.

Belongs to the PAPS reductase family. CysH subfamily.

The protein localises to the cytoplasm. The enzyme catalyses [thioredoxin]-disulfide + sulfite + adenosine 3',5'-bisphosphate + 2 H(+) = [thioredoxin]-dithiol + 3'-phosphoadenylyl sulfate. It participates in sulfur metabolism; hydrogen sulfide biosynthesis; sulfite from sulfate: step 3/3. Catalyzes the formation of sulfite from phosphoadenosine 5'-phosphosulfate (PAPS) using thioredoxin as an electron donor. The polypeptide is Phosphoadenosine 5'-phosphosulfate reductase (Escherichia coli O81 (strain ED1a)).